Reading from the N-terminus, the 429-residue chain is Serine hydroxymethyltransferase (429 aa).

(6S)-5,6,7,8-tetrahydrofolate-binding positions include leucine 127 and 131-133 (GHL). Lysine 236 carries the post-translational modification N6-(pyridoxal phosphate)lysine. Position 252 (glutamate 252) interacts with (6S)-5,6,7,8-tetrahydrofolate.

Belongs to the SHMT family. As to quaternary structure, homodimer. It depends on pyridoxal 5'-phosphate as a cofactor.

It is found in the cytoplasm. It catalyses the reaction (6R)-5,10-methylene-5,6,7,8-tetrahydrofolate + glycine + H2O = (6S)-5,6,7,8-tetrahydrofolate + L-serine. It functions in the pathway one-carbon metabolism; tetrahydrofolate interconversion. Its pathway is amino-acid biosynthesis; glycine biosynthesis; glycine from L-serine: step 1/1. Catalyzes the reversible interconversion of serine and glycine with tetrahydrofolate (THF) serving as the one-carbon carrier. This reaction serves as the major source of one-carbon groups required for the biosynthesis of purines, thymidylate, methionine, and other important biomolecules. Also exhibits THF-independent aldolase activity toward beta-hydroxyamino acids, producing glycine and aldehydes, via a retro-aldol mechanism. The sequence is that of Serine hydroxymethyltransferase from Rhodospirillum centenum (strain ATCC 51521 / SW).